Here is a 117-residue protein sequence, read N- to C-terminus: Con-Ins T3 (117 aa).

Positions 1–24 (MTTSFYFLLMALGLLLYVCQSSFG) are cleaved as a signal peptide. The propeptide occupies 25-29 (NQHTR). Position 34 is a 4-hydroxyproline; partial (proline 34). Intrachain disulfides connect cysteine 38-cysteine 101, cysteine 50-cysteine 114, and cysteine 100-cysteine 105. Positions 53–94 (KRNDAGKKRGQASPLWQRGGSLSMLKARAKRNEAFHLQRAHR) are cleaved as a propeptide — c peptide. Glutamate 98 carries the 4-carboxyglutamate modification. Residue glutamate 109 is modified to 4-carboxyglutamate; partial. Position 114 is a cysteine amide (cysteine 114). A propeptide spanning residues 116 to 117 (NS) is cleaved from the precursor.

It belongs to the insulin family. As to quaternary structure, heterodimer of A and B chains; disulfide-linked. In terms of tissue distribution, expressed by the venom gland.

The protein localises to the secreted. In terms of biological role, this venom insulin facilitates prey capture by rapidly inducing hypoglycemic shock. It is one of the smallest known insulin found in nature and lacks the C-terminal segment of the B chain that, in human insulin, mediates engagement of the insulin receptor (INSR) and assembly of the hormone's hexameric storage form. Despite lacking this segment, it both binds and activates human insulin receptor (long isoform (HIR-B) OF INSR) with only a 10-fold lower potency. In vivo, intraperitoneal injection of this peptide into zebrafish lowers blood glucose with the same potency than human insulin. In addition, when applied to water, this peptide reduces overall locomotor activity of zebrafish larvae, observed as a significant decrease in the percentage of time spent swimming and movement frequency. This chain is Con-Ins T3, found in Conus tulipa (Fish-hunting cone snail).